A 263-amino-acid polypeptide reads, in one-letter code: TPR repeat-containing protein DDB_G0285095 (263 aa).

Residues 1-25 show a composition bias toward basic and acidic residues; sequence MGCCGSKEKYNGEDVPKSQRLENRP. Residues 1 to 62 are disordered; sequence MGCCGSKEKY…ASASQQNNPT (62 aa). TPR repeat units lie at residues 87 to 120, 121 to 154, and 162 to 195; these read SDLL…DTDN, SRAW…AAPK, and SSLL…GARS.

This Dictyostelium discoideum (Social amoeba) protein is TPR repeat-containing protein DDB_G0285095.